Consider the following 302-residue polypeptide: Flavin-dependent thymidylate synthase (302 aa).

In terms of domain architecture, ThyX spans 43–257 (GFVRVIDYMG…PFAYKAFEDY (215 aa)). Residues Thr-89, 112–114 (RHR), and Glu-120 each bind FAD. DUMP is bound by residues 109–112 (QWIR), 120–124 (EYSAR), and Arg-196. The short motif at 112–122 (RHRTANVNEYS) is the ThyX motif element. FAD contacts are provided by residues 212–214 (DLH) and His-218. Residue Arg-223 participates in dUMP binding. Arg-223 acts as the Involved in ionization of N3 of dUMP, leading to its activation in catalysis.

The protein belongs to the thymidylate synthase ThyX family. As to quaternary structure, homotetramer. It depends on FAD as a cofactor.

The enzyme catalyses dUMP + (6R)-5,10-methylene-5,6,7,8-tetrahydrofolate + NADPH + H(+) = dTMP + (6S)-5,6,7,8-tetrahydrofolate + NADP(+). Its pathway is pyrimidine metabolism; dTTP biosynthesis. Its function is as follows. Catalyzes the reductive methylation of 2'-deoxyuridine-5'-monophosphate (dUMP) to 2'-deoxythymidine-5'-monophosphate (dTMP) while utilizing 5,10-methylenetetrahydrofolate (mTHF) as the methyl donor, and NADPH and FADH(2) as the reductant. The sequence is that of Flavin-dependent thymidylate synthase from Ruegeria pomeroyi (strain ATCC 700808 / DSM 15171 / DSS-3) (Silicibacter pomeroyi).